The following is a 357-amino-acid chain: MSKKIVLLPGDGIGPEIVAEAKKVLEAVDAKFKLGLKFEEDLIGGCAIDVHGVPLAQSTLDRCKAADAVLMGSVGGPKWDALDSNIRPEKGLLKIRYEMGLYANLRPAILYPQLADASSLKPEIVSGLDILIVRELTGGIYFGEPRGIRLLDNGERQGYNTYVYAEHEIERIGRTAFEMAMKRDKKVCSVDKANVLEATVLWREVIQSISKDYPEVELSHMYVDNAAMQLVRAPKQFDVVVTGNMFGDILSDTAAMLTGSIGMLPSASLNQDSKGLYEPVHGSAPDIAGQGVANPLATILSAAMMLRYSLNEAAAADAIEAAVGAVLDDGLRSADIFSEGMKKVSTQEMGDAVAAKI.

76–89 lines the NAD(+) pocket; the sequence is GPKWDALDSNIRPE. Positions 96, 106, 134, and 224 each coordinate substrate. Mg(2+) contacts are provided by aspartate 224, aspartate 248, and aspartate 252. Residue 282–294 coordinates NAD(+); it reads GSAPDIAGQGVAN.

Belongs to the isocitrate and isopropylmalate dehydrogenases family. LeuB type 1 subfamily. Homodimer. It depends on Mg(2+) as a cofactor. The cofactor is Mn(2+).

The protein resides in the cytoplasm. The enzyme catalyses (2R,3S)-3-isopropylmalate + NAD(+) = 4-methyl-2-oxopentanoate + CO2 + NADH. Its pathway is amino-acid biosynthesis; L-leucine biosynthesis; L-leucine from 3-methyl-2-oxobutanoate: step 3/4. In terms of biological role, catalyzes the oxidation of 3-carboxy-2-hydroxy-4-methylpentanoate (3-isopropylmalate) to 3-carboxy-4-methyl-2-oxopentanoate. The product decarboxylates to 4-methyl-2 oxopentanoate. The polypeptide is 3-isopropylmalate dehydrogenase (Saccharophagus degradans (strain 2-40 / ATCC 43961 / DSM 17024)).